A 569-amino-acid chain; its full sequence is 2-succinyl-5-enolpyruvyl-6-hydroxy-3-cyclohexene-1-carboxylate synthase (569 aa).

The protein belongs to the TPP enzyme family. MenD subfamily. Homodimer. Mg(2+) is required as a cofactor. Mn(2+) serves as cofactor. Requires thiamine diphosphate as cofactor.

It catalyses the reaction isochorismate + 2-oxoglutarate + H(+) = 5-enolpyruvoyl-6-hydroxy-2-succinyl-cyclohex-3-ene-1-carboxylate + CO2. It functions in the pathway quinol/quinone metabolism; 1,4-dihydroxy-2-naphthoate biosynthesis; 1,4-dihydroxy-2-naphthoate from chorismate: step 2/7. Its pathway is cofactor biosynthesis; phylloquinone biosynthesis. Its function is as follows. Catalyzes the thiamine diphosphate-dependent decarboxylation of 2-oxoglutarate and the subsequent addition of the resulting succinic semialdehyde-thiamine pyrophosphate anion to isochorismate to yield 2-succinyl-5-enolpyruvyl-6-hydroxy-3-cyclohexene-1-carboxylate (SEPHCHC). This is 2-succinyl-5-enolpyruvyl-6-hydroxy-3-cyclohexene-1-carboxylate synthase from Microcystis aeruginosa (strain NIES-843 / IAM M-2473).